Consider the following 71-residue polypeptide: MRRSFYSWLMTQRNPKSNEPVAILADYAFDESDFPKQSDNFDEVSRFLEESASFAFSMSDFDAIWEDYLGH.

It belongs to the UPF0346 family.

In Streptococcus suis (strain 05ZYH33), this protein is UPF0346 protein SSU05_1322.